Consider the following 530-residue polypeptide: Cytochrome P450 monooxygenase apf7 (530 aa).

The chain crosses the membrane as a helical span at residues 6–26; that stretch reads VSPVSIWVFVIYAVTIIIAIY. N-linked (GlcNAc...) asparagine glycosylation is present at N85. C464 lines the heme pocket.

The protein belongs to the cytochrome P450 family. It depends on heme as a cofactor.

It localises to the membrane. The protein operates within secondary metabolite biosynthesis. In terms of biological role, cytochrome P450 monooxygenase; part of the gene cluster that mediates the biosynthesis of the cyclic tetrapeptide apicidin F (APF). The non-ribosomal peptide synthetase apf1 incorporates four different amino acids to produce apicidin F: L-phenylalanine, D-pipecolic acid (D-pip), N-methoxy-L-tryptophan and L-2-aminooctanedioic acid. L-Phenylalanine is the only proteinogenic amino acid directly used by apf1. The 3 other apf1 substrates are non-proteinogenic and have to be modified by other enzymes of the cluster. Lysine is converted to delta-1-pyrroline-5-carboxylate (P5C) which is reduced to L-pipecolic acid (L-pip) by apf3. L-pip is epimerized to D-pip, probably by apf1 activity, prior to incorporation. L-Tryptophan is N-oxidyzed by one of the cytochrome P450 monooxygenases (apf7 or apf8), and further methylated at the hydroxy group by the O-methyltransferase apf6 to yield N-methoxy-L-tryptophan. The synthesis of the fourth apf1 substrate is more complex. The fatty acid synthase apf5 is involved in the synthesis of the octanoic acid backbone of L-2-aminooctanedioic acid by fixing one acetyl-CoA unit and three malonyl-CoA units. Then one of the cytochrome P450 monooxygenases (apf7 or apf8) may oxidize this backbone to 2-oxooctanoic acid. The aminotransferase apf4 is predicted to catalyze the exchange of the keto group with an amino group. The next step would be the oxidation of 2-aminooctanoic acid by one of the cytochrome P450 monooxygenases (apf7 or apf8). The last step is the oxidation of 2-amino-8-hydroxyoctanoic acid to 2-aminooctanedioic acid is catalyzed by the FAD-dependent monooxygenase apf9. The protein is Cytochrome P450 monooxygenase apf7 of Gibberella fujikuroi (strain CBS 195.34 / IMI 58289 / NRRL A-6831) (Bakanae and foot rot disease fungus).